Reading from the N-terminus, the 455-residue chain is Folate transporter 2 (455 aa).

A run of 8 helical transmembrane segments spans residues 42–64, 84–103, 110–131, 137–157, 177–195, 201–221, 242–261, and 281–301; these read IVVY…IYYL, YIPF…FSIF, YLFL…LNLS, LILF…EALV, IASK…GYFL, EYIF…CLFL, FINT…YMSG, and SFMG…IIIY. The N-linked (GlcNAc...) asparagine glycan is linked to Asn307. 2 helical membrane passes run 313–331 and 347–367; these read TLII…PIIL and VLSG…PLFI. N-linked (GlcNAc...) asparagine glycosylation is present at Asn416. Residues 417-438 traverse the membrane as a helical segment; it reads LSLYILTCGFFLLFSLTLVPLL.

Belongs to the major facilitator superfamily. Folate-biopterin transporter (TC 2.A.71) family.

It localises to the cell membrane. It catalyses the reaction folate(in) + H(+)(in) = folate(out) + H(+)(out). The catalysed reaction is (6S)-5-methyl-5,6,7,8-tetrahydrofolate(in) + H(+)(in) = (6S)-5-methyl-5,6,7,8-tetrahydrofolate(out) + H(+)(out). Transport of folates is inhibited by probenecid and methotrexate. Folate transporter with broad substrate specificity. Transports folic acid, folinic acid, pteroic acid, dihydropteroic acid, the folate precursor p-amino benzoic acid (pABA) and the human folate catabolite pABA monoglutamate. Can transport 5-methyltetrahydrofolate with low efficiency. This is Folate transporter 2 from Plasmodium falciparum (isolate 3D7).